The following is a 328-amino-acid chain: D-cysteine desulfhydrase (328 aa).

N6-(pyridoxal phosphate)lysine is present on K51.

It belongs to the ACC deaminase/D-cysteine desulfhydrase family. In terms of assembly, homodimer. Pyridoxal 5'-phosphate serves as cofactor.

The enzyme catalyses D-cysteine + H2O = hydrogen sulfide + pyruvate + NH4(+) + H(+). Its function is as follows. Catalyzes the alpha,beta-elimination reaction of D-cysteine and of several D-cysteine derivatives. It could be a defense mechanism against D-cysteine. The sequence is that of D-cysteine desulfhydrase from Salmonella paratyphi A (strain AKU_12601).